Here is a 279-residue protein sequence, read N- to C-terminus: Stathmin domain-containing protein 1 (279 aa).

Disordered stretches follow at residues 1–110 (MGCG…ERPK) and 178–254 (AAEE…VAQM). Residue G2 is the site of N-myristoyl glycine attachment. The span at 22-32 (KGWEEGSKADV) shows a compositional bias: basic and acidic residues. Residues 34–45 (VTSSKENCSPQT) show a composition bias toward polar residues. The 128-residue stretch at 121–248 (QGIIQSRSKV…GEPLKRKKSE (128 aa)) folds into the SLD domain. Basic and acidic residues-rich tracts occupy residues 178–191 (AAEE…EEIR) and 232–242 (EKSDVQEGEPL).

This Mus musculus (Mouse) protein is Stathmin domain-containing protein 1 (Stmnd1).